Here is a 45-residue protein sequence, read N- to C-terminus: Pollen allergen Amb a 5 (45 aa).

Intrachain disulfides connect Cys4–Cys39, Cys11–Cys26, Cys18–Cys32, and Cys19–Cys43.

As to quaternary structure, monomer.

This Ambrosia artemisiifolia var. elatior (Short ragweed) protein is Pollen allergen Amb a 5.